An 86-amino-acid chain; its full sequence is Neurotoxin 3FTx-LT (86 aa).

The first 21 residues, 1-21, serve as a signal peptide directing secretion; it reads MKTLLLTLVVVTIVCLDLGYT. Disulfide bonds link cysteine 24-cysteine 45, cysteine 27-cysteine 32, cysteine 38-cysteine 63, cysteine 67-cysteine 78, and cysteine 79-cysteine 84.

In terms of tissue distribution, expressed by the venom gland.

It localises to the secreted. Binds with low affinity to muscular (alpha-1-beta-1-delta-epsilon/CHRNA1-CHRNB1-CHRND-CHRNE) and very low affinity to neuronal (alpha-7/CHRNA7) nicotinic acetylcholine receptor (nAChR). This Bungarus fasciatus (Banded krait) protein is Neurotoxin 3FTx-LT.